The primary structure comprises 100 residues: Small ribosomal subunit protein uS14c (100 aa).

The protein belongs to the universal ribosomal protein uS14 family. As to quaternary structure, part of the 30S ribosomal subunit.

It is found in the plastid. It localises to the chloroplast. Its function is as follows. Binds 16S rRNA, required for the assembly of 30S particles. The chain is Small ribosomal subunit protein uS14c from Amborella trichopoda.